A 423-amino-acid polypeptide reads, in one-letter code: Probable electron transfer flavoprotein-quinone oxidoreductase YgcN (423 aa).

An FAD-binding site is contributed by 7 to 21 (IIIIGAGIAGTACAL).

The protein belongs to the ETF-QO/FixC family. FAD is required as a cofactor.

Probably accepts electrons from YgcQ/YgcR and reduces a quinone. The sequence is that of Probable electron transfer flavoprotein-quinone oxidoreductase YgcN (ygcN) from Escherichia coli (strain K12).